A 127-amino-acid polypeptide reads, in one-letter code: Ribosome-binding factor A (127 aa).

It belongs to the RbfA family. Monomer. Binds 30S ribosomal subunits, but not 50S ribosomal subunits or 70S ribosomes.

The protein resides in the cytoplasm. One of several proteins that assist in the late maturation steps of the functional core of the 30S ribosomal subunit. Associates with free 30S ribosomal subunits (but not with 30S subunits that are part of 70S ribosomes or polysomes). Required for efficient processing of 16S rRNA. May interact with the 5'-terminal helix region of 16S rRNA. The chain is Ribosome-binding factor A from Chloroflexus aggregans (strain MD-66 / DSM 9485).